An 86-amino-acid polypeptide reads, in one-letter code: Cell division topological specificity factor (86 aa).

Belongs to the MinE family.

Its function is as follows. Prevents the cell division inhibition by proteins MinC and MinD at internal division sites while permitting inhibition at polar sites. This ensures cell division at the proper site by restricting the formation of a division septum at the midpoint of the long axis of the cell. The sequence is that of Cell division topological specificity factor from Shewanella piezotolerans (strain WP3 / JCM 13877).